The chain runs to 461 residues: Ornithine decarboxylase (461 aa).

An N6-(pyridoxal phosphate)lysine modification is found at K69. Pyridoxal 5'-phosphate contacts are provided by residues S200, G237, and 274–277; that span reads EPGR. Residue S303 is modified to Phosphoserine; by CK2. Substrate is bound at residue 331–332; that stretch reads YD. The Proton donor; shared with dimeric partner role is filled by C360. C360 bears the S-nitrosocysteine mark. D361 serves as a coordination point for substrate. Y389 contributes to the pyridoxal 5'-phosphate binding site.

It belongs to the Orn/Lys/Arg decarboxylase class-II family. In terms of assembly, homodimer. Only the dimer is catalytically active, as the active sites are constructed of residues from both monomers. Does not form a heterodimer with AZIN2. It depends on pyridoxal 5'-phosphate as a cofactor. As to expression, expressed during testis development in the outer part of the seminiferous tubules.

It carries out the reaction L-ornithine + H(+) = putrescine + CO2. It functions in the pathway amine and polyamine biosynthesis; putrescine biosynthesis via L-ornithine pathway; putrescine from L-ornithine: step 1/1. With respect to regulation, inhibited by antizymes (AZs) OAZ1, OAZ2 and OAZ3 in response to polyamine levels. AZs inhibit the assembly of the functional homodimer by binding to ODC monomers. Additionally, OAZ1 targets ODC monomers for ubiquitin-independent proteolytic destruction by the 26S proteasome. Functionally, catalyzes the first and rate-limiting step of polyamine biosynthesis that converts ornithine into putrescine, which is the precursor for the polyamines, spermidine and spermine. Polyamines are essential for cell proliferation and are implicated in cellular processes, ranging from DNA replication to apoptosis. The sequence is that of Ornithine decarboxylase (Odc1) from Mus musculus (Mouse).